Here is a 245-residue protein sequence, read N- to C-terminus: Eukaryotic translation initiation factor 6 (245 aa).

A phosphoserine; by CK1 mark is found at Ser174 and Ser175. At Ser231 the chain carries Phosphoserine.

This sequence belongs to the eIF-6 family. As to quaternary structure, monomer. Associates with the 60S ribosomal subunit. In terms of processing, phosphorylation at Ser-174 and Ser-175 promotes nuclear export.

The protein resides in the cytoplasm. It is found in the nucleus. It localises to the nucleolus. Binds to the 60S ribosomal subunit and prevents its association with the 40S ribosomal subunit to form the 80S initiation complex in the cytoplasm. Is also involved in ribosome biogenesis. Associates with pre-60S subunits in the nucleus and is involved in its nuclear export. Cytoplasmic release of TIF6 from 60S subunits and nuclear relocalization is promoted by the GTPase RIA1/EFL1 and by SDO1. Also required for pre-rRNA processing. The polypeptide is Eukaryotic translation initiation factor 6 (Saccharomyces cerevisiae (strain ATCC 204508 / S288c) (Baker's yeast)).